We begin with the raw amino-acid sequence, 166 residues long: MTDLLHKLNFKIADASPEYKQRRKIQMIRFFTASAVTIFASRFAYRATVSRQYIPTLFQGNHSPPLSYNFTTDAAVAVGTGTLLCGSVTGMTVFGLCWILDVSNIQEFGWRMKSMLGGWESEKKLSEAPMDEESSYIQDSLNDILDGKYDFEEDTEEVHTAEMKTK.

Transmembrane regions (helical) follow at residues 27–49 (MIRFFTASAVTIFASRFAYRATV) and 78–100 (VGTGTLLCGSVTGMTVFGLCWIL).

It belongs to the AIM11 family.

It is found in the membrane. The chain is Altered inheritance of mitochondria protein 11 (AIM11) from Candida dubliniensis (strain CD36 / ATCC MYA-646 / CBS 7987 / NCPF 3949 / NRRL Y-17841) (Yeast).